Reading from the N-terminus, the 156-residue chain is Putative pre-16S rRNA nuclease (156 aa).

Belongs to the YqgF nuclease family.

It is found in the cytoplasm. Could be a nuclease involved in processing of the 5'-end of pre-16S rRNA. The protein is Putative pre-16S rRNA nuclease of Bartonella tribocorum (strain CIP 105476 / IBS 506).